Consider the following 274-residue polypeptide: Secreted RxLR effector protein 40 (274 aa).

Residues 1 to 21 (MRLYTQVVAASLVATLAIVDS) form the signal peptide. Positions 35–53 (RFLRQDNATVARVSEDGER) match the RxLR-dEER motif. Residues asparagine 41, asparagine 74, and asparagine 258 are each glycosylated (N-linked (GlcNAc...) asparagine).

The protein belongs to the RxLR effector family.

It localises to the secreted. The protein localises to the host nucleus. Its subcellular location is the host cytoplasm. Secreted effector that completely suppresses the host cell death induced by cell death-inducing proteins. This is Secreted RxLR effector protein 40 from Plasmopara viticola (Downy mildew of grapevine).